A 185-amino-acid polypeptide reads, in one-letter code: Ribosome-recycling factor (185 aa).

This sequence belongs to the RRF family.

It localises to the cytoplasm. Responsible for the release of ribosomes from messenger RNA at the termination of protein biosynthesis. May increase the efficiency of translation by recycling ribosomes from one round of translation to another. The protein is Ribosome-recycling factor of Helicobacter pylori (strain Shi470).